The following is a 263-amino-acid chain: 3-methyl-2-oxobutanoate hydroxymethyltransferase (263 aa).

The Mg(2+) site is built by D44 and D83. 3-methyl-2-oxobutanoate is bound by residues 44–45 (DS), D83, and K113. Position 115 (E115) interacts with Mg(2+). E183 functions as the Proton acceptor in the catalytic mechanism.

The protein belongs to the PanB family. As to quaternary structure, homodecamer; pentamer of dimers. It depends on Mg(2+) as a cofactor.

It is found in the cytoplasm. The catalysed reaction is 3-methyl-2-oxobutanoate + (6R)-5,10-methylene-5,6,7,8-tetrahydrofolate + H2O = 2-dehydropantoate + (6S)-5,6,7,8-tetrahydrofolate. It participates in cofactor biosynthesis; (R)-pantothenate biosynthesis; (R)-pantoate from 3-methyl-2-oxobutanoate: step 1/2. Catalyzes the reversible reaction in which hydroxymethyl group from 5,10-methylenetetrahydrofolate is transferred onto alpha-ketoisovalerate to form ketopantoate. This Trichodesmium erythraeum (strain IMS101) protein is 3-methyl-2-oxobutanoate hydroxymethyltransferase.